Here is a 360-residue protein sequence, read N- to C-terminus: Phospho-N-acetylmuramoyl-pentapeptide-transferase (360 aa).

Transmembrane regions (helical) follow at residues Tyr21–Gly41, Met74–Ala94, Tyr97–Tyr117, Ile135–Val155, Ile168–Ser188, Gly199–Ser219, Ala236–Phe256, Val263–Leu283, Ile288–Val308, and Val338–Lys358.

Belongs to the glycosyltransferase 4 family. MraY subfamily. The cofactor is Mg(2+).

The protein localises to the cell inner membrane. The catalysed reaction is UDP-N-acetyl-alpha-D-muramoyl-L-alanyl-gamma-D-glutamyl-meso-2,6-diaminopimeloyl-D-alanyl-D-alanine + di-trans,octa-cis-undecaprenyl phosphate = di-trans,octa-cis-undecaprenyl diphospho-N-acetyl-alpha-D-muramoyl-L-alanyl-D-glutamyl-meso-2,6-diaminopimeloyl-D-alanyl-D-alanine + UMP. It participates in cell wall biogenesis; peptidoglycan biosynthesis. Catalyzes the initial step of the lipid cycle reactions in the biosynthesis of the cell wall peptidoglycan: transfers peptidoglycan precursor phospho-MurNAc-pentapeptide from UDP-MurNAc-pentapeptide onto the lipid carrier undecaprenyl phosphate, yielding undecaprenyl-pyrophosphoryl-MurNAc-pentapeptide, known as lipid I. This is Phospho-N-acetylmuramoyl-pentapeptide-transferase from Shewanella sediminis (strain HAW-EB3).